The sequence spans 61 residues: Photosystem II reaction center protein K (61 aa).

A propeptide spanning residues 1 to 24 (MINIFSFICIYLHSALYSSSFFFG) is cleaved from the precursor. Residues 40 to 60 (MPVIPLFFFLLAFVWQAAVSF) traverse the membrane as a helical segment.

This sequence belongs to the PsbK family. As to quaternary structure, PSII is composed of 1 copy each of membrane proteins PsbA, PsbB, PsbC, PsbD, PsbE, PsbF, PsbH, PsbI, PsbJ, PsbK, PsbL, PsbM, PsbT, PsbX, PsbY, PsbZ, Psb30/Ycf12, at least 3 peripheral proteins of the oxygen-evolving complex and a large number of cofactors. It forms dimeric complexes.

The protein localises to the plastid. It is found in the chloroplast thylakoid membrane. In terms of biological role, one of the components of the core complex of photosystem II (PSII). PSII is a light-driven water:plastoquinone oxidoreductase that uses light energy to abstract electrons from H(2)O, generating O(2) and a proton gradient subsequently used for ATP formation. It consists of a core antenna complex that captures photons, and an electron transfer chain that converts photonic excitation into a charge separation. This Pelargonium hortorum (Common geranium) protein is Photosystem II reaction center protein K.